A 212-amino-acid polypeptide reads, in one-letter code: V-type ATP synthase subunit E (212 aa).

It belongs to the V-ATPase E subunit family.

In terms of biological role, produces ATP from ADP in the presence of a proton gradient across the membrane. The sequence is that of V-type ATP synthase subunit E from Nitrosococcus oceani (strain ATCC 19707 / BCRC 17464 / JCM 30415 / NCIMB 11848 / C-107).